The sequence spans 446 residues: Glucosylglycerate hydrolase (446 aa).

Substrate-binding positions include Tyr36, 40–43 (WSWD), Tyr88, Gln115, and Gly180. The active-site Proton donor is the Asp182. Substrate is bound by residues Arg216 and 375-376 (YW). Glu419 functions as the Proton acceptor in the catalytic mechanism. Gln434 provides a ligand contact to substrate.

It belongs to the glycosyl hydrolase 63 family. As to quaternary structure, homotetramer. Dimer of dimers.

The catalysed reaction is (2R)-2-O-(alpha-D-glucopyranosyl)-glycerate + H2O = (R)-glycerate + D-glucose. With respect to regulation, activity is not dependent on divalent cations, but it is enhanced by Mg(2+). Functionally, catalyzes the hydrolysis of glucosylglycerate (GG) to glycerate and glucose. Involved in recovery from nitrogen starvation by promoting the rapid mobilization of the glucosylglycerate that accumulates under these conditions. Can also hydrolyze mannosylglycerate (MG), with tenfold lower efficiency. In Mycolicibacterium hassiacum (strain DSM 44199 / CIP 105218 / JCM 12690 / 3849) (Mycobacterium hassiacum), this protein is Glucosylglycerate hydrolase.